The chain runs to 139 residues: Large-conductance mechanosensitive channel (139 aa).

A run of 2 helical transmembrane segments spans residues 14-34 (VVDM…VKSL) and 86-106 (GLFI…FLLI).

It belongs to the MscL family. As to quaternary structure, homopentamer.

Its subcellular location is the cell inner membrane. Its function is as follows. Channel that opens in response to stretch forces in the membrane lipid bilayer. May participate in the regulation of osmotic pressure changes within the cell. This Methylobacillus flagellatus (strain ATCC 51484 / DSM 6875 / VKM B-1610 / KT) protein is Large-conductance mechanosensitive channel.